Reading from the N-terminus, the 576-residue chain is Nuclear/nucleolar GTPase 2 (576 aa).

2 disordered regions span residues 1–61 (MVKK…SNEY) and 166–186 (QDAF…EEED). A compositionally biased stretch (basic and acidic residues) spans 16–34 (HSLDANRADGKKKTTETRS). A compositionally biased stretch (basic residues) spans 42–52 (KMYKTRPKRNA). Residues 206-367 (WGELYKVIDS…LIDCPGVVYQ (162 aa)) form the CP-type G domain. A DARXP motif motif is present at residues 224-228 (DARDP). Positions 254 to 257 (NKCD) are G4. A GTP-binding site is contributed by 254–257 (NKCD). Residues 283–285 (SVN) form a G5 region. The G1 stretch occupies residues 316-323 (GYPNVGKS). Residue 319-324 (NVGKSS) participates in GTP binding. A G2 region spans residues 342–346 (GETKV). A G3 region spans residues 360–363 (DCPG). Residue glycine 363 coordinates GTP. Positions 502-576 (TQQQKDVPVQ…DEEDESDSAE (75 aa)) are disordered. The span at 509–530 (PVQRDFYDEKDLKDDKKAKEST) shows a compositional bias: basic and acidic residues. Residues 531-576 (ETDAENGTDAEEDEDAVSEDGVESDSDADEDAVSENDEEDESDSAE) show a composition bias toward acidic residues.

It belongs to the TRAFAC class YlqF/YawG GTPase family. RsgA subfamily. In terms of assembly, interacts with the 60S ribosomal proteins RPL10AA, RPL10AB and RPL10AC. In terms of tissue distribution, ubiquitous, with higher levels in meristematic regions.

It is found in the nucleus. The protein localises to the nucleolus. With respect to regulation, the GTPase activity is stimulated in the presence of the 60S ribosomal subunit. Functionally, GTPase involved in pre-60S ribosomal subunit maturation. The protein is Nuclear/nucleolar GTPase 2 of Arabidopsis thaliana (Mouse-ear cress).